A 224-amino-acid chain; its full sequence is PKHD-type hydroxylase SO_3913 (224 aa).

The Fe2OG dioxygenase domain occupies Gln78–Ser176. Residues His96, Asp98, and His157 each contribute to the Fe cation site. 2-oxoglutarate is bound at residue Arg167.

Fe(2+) serves as cofactor. The cofactor is L-ascorbate.

This Shewanella oneidensis (strain ATCC 700550 / JCM 31522 / CIP 106686 / LMG 19005 / NCIMB 14063 / MR-1) protein is PKHD-type hydroxylase SO_3913.